A 433-amino-acid polypeptide reads, in one-letter code: Sulfhydrylase FUB7 (433 aa).

N6-(pyridoxal phosphate)lysine is present on K211.

Belongs to the trans-sulfuration enzymes family. Requires pyridoxal 5'-phosphate as cofactor.

The protein operates within mycotoxin biosynthesis. Sulfhydrylase; part of the gene cluster that mediates the biosynthesis of fusaric acid, a mycotoxin with low to moderate toxicity to animals and humans, but with high phytotoxic properties. L-aspartate is suggested as fusaric acid amino acid precursor that is activated and further processed to O-acetyl-L-homoserine by cluster enzymes aspartate kinase FUB3 and homoserine O-acetyltransferase FUB5, as well as enzymes of the primary metabolism. The polyketide synthase (PKS) FUB1 generates the triketide trans-2-hexenal which is presumptively released by the hydrolase FUB4 and linked to the NRPS-bound amino acid precursor by NAD(P)-dependent dehydrogenase FUB6. FUB1, FUB4, and the non-canonical NRPS Fub8 may form an enzyme complex. Further processing of the NRPS-bound intermediate might be carried out by FUB6 and the O-acetylhomoserine FUB7, enabling a spontaneous electrocyclization to close the carbon backbone of fusaric acid. Dihydrofusaric acid is likely to be released via reduction by the thioester reductase (TR) domain of FUB8 whereupon the final oxidation to fusaric acid may (also) be performed by the FMN-dependent dehydrogenase FUB9. The protein is Sulfhydrylase FUB7 of Gibberella moniliformis (strain M3125 / FGSC 7600) (Maize ear and stalk rot fungus).